The sequence spans 65 residues: Omega-lycotoxin-Am1f (65 aa).

Positions glycine 1 to arginine 18 are excised as a propeptide. Cystine bridges form between cysteine 22–cysteine 37, cysteine 29–cysteine 42, cysteine 36–cysteine 62, and cysteine 44–cysteine 60.

The protein belongs to the neurotoxin omega-lctx family. Expressed by the venom gland.

It localises to the secreted. Functionally, modulates Cav2.1/CACNA1A voltage-gated calcium channels (P/Q-type currents) in rat cerebellar Purkinje cells and hippocampal CA1-CA3 neurons. At saturating concentrations (&gt;10 nM) decelerates activation kinetics and slightly increases peak amplitude without affecting deactivation kinetics. In vivo, does not cause death when intravenously injected into mice. In rat models, through its activity on Cav2.1/CACNA1A, has an ameliorative effect on memory defects provoked by hyperstimulation of N-methyl-D-aspartate receptors (NMDARs) in the hippocampus. The protein is Omega-lycotoxin-Am1f of Alopecosa marikovskyi (Wolf spider).